Here is a 158-residue protein sequence, read N- to C-terminus: 6,7-dimethyl-8-ribityllumazine synthase (158 aa).

Residues phenylalanine 22, 56–58, and 80–82 contribute to the 5-amino-6-(D-ribitylamino)uracil site; these read ALE and VVI. Residue 85–86 coordinates (2S)-2-hydroxy-3-oxobutyl phosphate; sequence ET. The Proton donor role is filled by histidine 88. Asparagine 113 provides a ligand contact to 5-amino-6-(D-ribitylamino)uracil. Arginine 127 serves as a coordination point for (2S)-2-hydroxy-3-oxobutyl phosphate.

It belongs to the DMRL synthase family.

It catalyses the reaction (2S)-2-hydroxy-3-oxobutyl phosphate + 5-amino-6-(D-ribitylamino)uracil = 6,7-dimethyl-8-(1-D-ribityl)lumazine + phosphate + 2 H2O + H(+). It functions in the pathway cofactor biosynthesis; riboflavin biosynthesis; riboflavin from 2-hydroxy-3-oxobutyl phosphate and 5-amino-6-(D-ribitylamino)uracil: step 1/2. Catalyzes the formation of 6,7-dimethyl-8-ribityllumazine by condensation of 5-amino-6-(D-ribitylamino)uracil with 3,4-dihydroxy-2-butanone 4-phosphate. This is the penultimate step in the biosynthesis of riboflavin. The polypeptide is 6,7-dimethyl-8-ribityllumazine synthase (Neisseria gonorrhoeae (strain ATCC 700825 / FA 1090)).